Here is a 364-residue protein sequence, read N- to C-terminus: Matrix protein (364 aa).

The FPIV motif signature appears at 23 to 26; sequence FPIV.

Belongs to the morbillivirus/respirovirus/rubulavirus M protein family.

It localises to the virion. Functionally, the M protein has a crucial role in virus assembly and interacts with the RNP complex as well as with the viral membrane. The polypeptide is Matrix protein (M) (Gallus gallus (Chicken)).